The primary structure comprises 336 residues: Galactinol synthase 6 (336 aa).

Lysine 106 is a catalytic residue. The Mn(2+) site is built by aspartate 122, aspartate 124, and histidine 260.

The protein belongs to the glycosyltransferase 8 family. Galactosyltransferase subfamily. A divalent metal cation serves as cofactor.

The protein localises to the cytoplasm. It carries out the reaction myo-inositol + UDP-alpha-D-galactose = alpha-D-galactosyl-(1-&gt;3)-1D-myo-inositol + UDP + H(+). In terms of biological role, galactinol synthase involved in the biosynthesis of raffinose family oligosaccharides (RFOs) that function as osmoprotectants. May promote plant stress tolerance. This chain is Galactinol synthase 6 (GOLS6), found in Arabidopsis thaliana (Mouse-ear cress).